Here is a 388-residue protein sequence, read N- to C-terminus: ATP phosphoribosyltransferase regulatory subunit (388 aa).

Belongs to the class-II aminoacyl-tRNA synthetase family. HisZ subfamily. In terms of assembly, heteromultimer composed of HisG and HisZ subunits.

The protein resides in the cytoplasm. It functions in the pathway amino-acid biosynthesis; L-histidine biosynthesis; L-histidine from 5-phospho-alpha-D-ribose 1-diphosphate: step 1/9. In terms of biological role, required for the first step of histidine biosynthesis. May allow the feedback regulation of ATP phosphoribosyltransferase activity by histidine. This Acinetobacter baumannii (strain SDF) protein is ATP phosphoribosyltransferase regulatory subunit.